Consider the following 161-residue polypeptide: Transcriptional repressor NrdR (161 aa).

The tract at residues 1–23 (MRCPFCGHPDTQVKDSRPAEDGN) is disordered. Residues 3–34 (CPFCGHPDTQVKDSRPAEDGNAIRRRRQCPSC) fold into a zinc finger. The segment covering 11–23 (TQVKDSRPAEDGN) has biased composition (basic and acidic residues). One can recognise an ATP-cone domain in the interval 49 to 139 (LTVMKKSGRR…VYKDFHKVED (91 aa)).

Belongs to the NrdR family. Zn(2+) serves as cofactor.

Negatively regulates transcription of bacterial ribonucleotide reductase nrd genes and operons by binding to NrdR-boxes. This Maricaulis maris (strain MCS10) (Caulobacter maris) protein is Transcriptional repressor NrdR.